We begin with the raw amino-acid sequence, 204 residues long: LexA repressor (204 aa).

A DNA-binding region (H-T-H motif) is located at residues 27-47 (VREIGEAVGLASSSTVHGHLA). Residues Ser-126 and Lys-164 each act as for autocatalytic cleavage activity in the active site.

Belongs to the peptidase S24 family. Homodimer.

The catalysed reaction is Hydrolysis of Ala-|-Gly bond in repressor LexA.. Functionally, represses a number of genes involved in the response to DNA damage (SOS response), including recA and lexA. In the presence of single-stranded DNA, RecA interacts with LexA causing an autocatalytic cleavage which disrupts the DNA-binding part of LexA, leading to derepression of the SOS regulon and eventually DNA repair. The sequence is that of LexA repressor from Listeria monocytogenes serotype 4b (strain CLIP80459).